The primary structure comprises 111 residues: Class I hydrophobin 10 (111 aa).

The N-terminal stretch at 1–17 is a signal peptide; sequence MLFNTFVVTALASLAAA. 4 disulfides stabilise this stretch: Cys-30–Cys-90, Cys-37–Cys-84, Cys-38–Cys-71, and Cys-91–Cys-104.

The protein belongs to the fungal hydrophobin family. Self-assembles to form functional amyloid fibrils called rodlets. Self-assembly into fibrillar rodlets occurs spontaneously at hydrophobic:hydrophilic interfaces and the rodlets further associate laterally to form amphipathic monolayers.

Its subcellular location is the secreted. It localises to the cell wall. Its function is as follows. Aerial growth, conidiation, and dispersal of filamentous fungi in the environment rely upon a capability of their secreting small amphipathic proteins called hydrophobins (HPBs) with low sequence identity. Class I can self-assemble into an outermost layer of rodlet bundles on aerial cell surfaces, conferring cellular hydrophobicity that supports fungal growth, development and dispersal; whereas Class II form highly ordered films at water-air interfaces through intermolecular interactions but contribute nothing to the rodlet structure. In Pleurotus ostreatus (strain PC15) (Oyster mushroom), this protein is Class I hydrophobin 10.